The primary structure comprises 63 residues: Small ribosomal subunit protein eS27 (63 aa).

Zn(2+) contacts are provided by cysteine 18, cysteine 21, cysteine 37, and cysteine 40. The segment at 18 to 40 (CIDCGNEQIVFSHPATKVRCLIC) adopts a C4-type zinc-finger fold.

Belongs to the eukaryotic ribosomal protein eS27 family. In terms of assembly, part of the 30S ribosomal subunit. Requires Zn(2+) as cofactor.

The protein is Small ribosomal subunit protein eS27 of Pyrococcus furiosus (strain ATCC 43587 / DSM 3638 / JCM 8422 / Vc1).